We begin with the raw amino-acid sequence, 183 residues long: Holliday junction branch migration complex subunit RuvA (183 aa).

The interval 1–64 (MVVGIEGIIT…EDSNKFYGFL (64 aa)) is domain I. The interval 65 to 139 (DKDEQKMFEM…DTKTKLENVS (75 aa)) is domain II. Residue Ser-139 is a region of interest, flexible linker. Positions 139 to 183 (SDDKSEALAALLTLGFKQEKIISVLASAQATGTSELIKEALKKLG) are domain III.

It belongs to the RuvA family. As to quaternary structure, homotetramer. Forms an RuvA(8)-RuvB(12)-Holliday junction (HJ) complex. HJ DNA is sandwiched between 2 RuvA tetramers; dsDNA enters through RuvA and exits via RuvB. An RuvB hexamer assembles on each DNA strand where it exits the tetramer. Each RuvB hexamer is contacted by two RuvA subunits (via domain III) on 2 adjacent RuvB subunits; this complex drives branch migration. In the full resolvosome a probable DNA-RuvA(4)-RuvB(12)-RuvC(2) complex forms which resolves the HJ.

The protein resides in the cytoplasm. Functionally, the RuvA-RuvB-RuvC complex processes Holliday junction (HJ) DNA during genetic recombination and DNA repair, while the RuvA-RuvB complex plays an important role in the rescue of blocked DNA replication forks via replication fork reversal (RFR). RuvA specifically binds to HJ cruciform DNA, conferring on it an open structure. The RuvB hexamer acts as an ATP-dependent pump, pulling dsDNA into and through the RuvAB complex. HJ branch migration allows RuvC to scan DNA until it finds its consensus sequence, where it cleaves and resolves the cruciform DNA. The chain is Holliday junction branch migration complex subunit RuvA from Campylobacter jejuni subsp. jejuni serotype O:23/36 (strain 81-176).